The following is a 466-amino-acid chain: ATP synthase subunit beta (466 aa).

Gly-155–Thr-162 is an ATP binding site.

The protein belongs to the ATPase alpha/beta chains family. In terms of assembly, F-type ATPases have 2 components, CF(1) - the catalytic core - and CF(0) - the membrane proton channel. CF(1) has five subunits: alpha(3), beta(3), gamma(1), delta(1), epsilon(1). CF(0) has three main subunits: a(1), b(2) and c(9-12). The alpha and beta chains form an alternating ring which encloses part of the gamma chain. CF(1) is attached to CF(0) by a central stalk formed by the gamma and epsilon chains, while a peripheral stalk is formed by the delta and b chains.

The protein resides in the cell inner membrane. It carries out the reaction ATP + H2O + 4 H(+)(in) = ADP + phosphate + 5 H(+)(out). In terms of biological role, produces ATP from ADP in the presence of a proton gradient across the membrane. The catalytic sites are hosted primarily by the beta subunits. The chain is ATP synthase subunit beta from Aromatoleum aromaticum (strain DSM 19018 / LMG 30748 / EbN1) (Azoarcus sp. (strain EbN1)).